A 327-amino-acid chain; its full sequence is Serine/threonine-protein phosphatase PP1-1 (327 aa).

Mn(2+) is bound by residues D63, H65, D91, and N123. Residue H124 is the Proton donor of the active site. The Mn(2+) site is built by H172 and H247. Positions 305-327 (GYQGSSQNWHMTPPRKNKTGNSK) are disordered. T316 carries the post-translational modification Phosphothreonine; by CDC2. Residues 317-327 (PPRKNKTGNSK) are compositionally biased toward basic residues.

This sequence belongs to the PPP phosphatase family. PP-1 subfamily. Oligomer. Requires Mn(2+) as cofactor.

It localises to the nucleus. The catalysed reaction is O-phospho-L-seryl-[protein] + H2O = L-seryl-[protein] + phosphate. The enzyme catalyses O-phospho-L-threonyl-[protein] + H2O = L-threonyl-[protein] + phosphate. Functionally, essential role in cell cycle control. PP1 is perhaps required for exit from mitosis. The chain is Serine/threonine-protein phosphatase PP1-1 (dis2) from Schizosaccharomyces pombe (strain 972 / ATCC 24843) (Fission yeast).